The primary structure comprises 617 residues: Membrane protein insertase YidC (617 aa).

A helical membrane pass occupies residues 8-28; it reads MFVAIGLSLLVLLGWQYFVAG. The segment covering 36-49 has biased composition (polar residues); sequence QIEAQNKAAQQQPP. Residues 36 to 91 are disordered; the sequence is QIEAQNKAAQQQPPGVTPDGVPSPSPKEGGPAAPAPGTLPTAQGGPVSREAALARS. Residues 61–81 show a composition bias toward low complexity; that stretch reads PKEGGPAAPAPGTLPTAQGGP. 4 helical membrane-spanning segments follow: residues 387 to 407, 461 to 481, 517 to 533, and 549 to 569; these read LFGNFGVSILVVTFCLKLLFL, WPVLIQIPVFFALYKVLFITI, FVHLGVWPIIMGITMFV, and IFTFMPIVFTFMLGSFPAGLV.

This sequence belongs to the OXA1/ALB3/YidC family. Type 1 subfamily. As to quaternary structure, interacts with the Sec translocase complex via SecD. Specifically interacts with transmembrane segments of nascent integral membrane proteins during membrane integration.

The protein localises to the cell inner membrane. Required for the insertion and/or proper folding and/or complex formation of integral membrane proteins into the membrane. Involved in integration of membrane proteins that insert both dependently and independently of the Sec translocase complex, as well as at least some lipoproteins. Aids folding of multispanning membrane proteins. In Methylobacterium radiotolerans (strain ATCC 27329 / DSM 1819 / JCM 2831 / NBRC 15690 / NCIMB 10815 / 0-1), this protein is Membrane protein insertase YidC.